The chain runs to 570 residues: Acetolactate synthase (570 aa).

Glu-60 contributes to the thiamine diphosphate binding site. Residues Gln-162, 266 to 287 (FRNQ…IGYD), and 308 to 327 (DEII…LIGD) each bind FAD. Residues 399 to 479 (SHAIWMSRYF…IVHIVWNDST (81 aa)) form a thiamine pyrophosphate binding region. Mg(2+) is bound at residue Asp-450.

This sequence belongs to the TPP enzyme family. Mg(2+) serves as cofactor. The cofactor is thiamine diphosphate.

The enzyme catalyses 2 pyruvate + H(+) = (2S)-2-acetolactate + CO2. It functions in the pathway polyol metabolism; (R,R)-butane-2,3-diol biosynthesis; (R,R)-butane-2,3-diol from pyruvate: step 1/3. In Bacillus subtilis (strain 168), this protein is Acetolactate synthase (alsS).